Reading from the N-terminus, the 61-residue chain is Sec-independent protein translocase protein TatA (61 aa).

The helical transmembrane segment at 1-21 threads the bilayer; the sequence is MFSNIGFPGLILILVAVLILF.

This sequence belongs to the TatA/E family. In terms of assembly, forms a complex with TatC.

It is found in the cell membrane. Its function is as follows. Part of the twin-arginine translocation (Tat) system that transports large folded proteins containing a characteristic twin-arginine motif in their signal peptide across membranes. TatA could form the protein-conducting channel of the Tat system. The chain is Sec-independent protein translocase protein TatA from Bacillus anthracis (strain A0248).